The sequence spans 456 residues: Exodeoxyribonuclease 7 large subunit (456 aa).

Belongs to the XseA family. In terms of assembly, heterooligomer composed of large and small subunits.

It localises to the cytoplasm. It catalyses the reaction Exonucleolytic cleavage in either 5'- to 3'- or 3'- to 5'-direction to yield nucleoside 5'-phosphates.. Functionally, bidirectionally degrades single-stranded DNA into large acid-insoluble oligonucleotides, which are then degraded further into small acid-soluble oligonucleotides. The protein is Exodeoxyribonuclease 7 large subunit of Escherichia coli O157:H7.